We begin with the raw amino-acid sequence, 226 residues long: Thioredoxin domain-containing protein 9 (226 aa).

The 129-residue stretch at 52 to 180 (LEALKKAQQQ…TTETLEWRLG (129 aa)) folds into the Thioredoxin domain. 3 positions are modified to phosphoserine: S188, S221, and S223.

Forms ternary complexes with the chaperonin TCP1 complex, spanning the cylindrical chaperonin cavity and contacting at least 2 subunits.

The protein resides in the cytoplasm. Its subcellular location is the nucleus. The protein localises to the cytoskeleton. It localises to the microtubule organizing center. It is found in the centrosome. The protein resides in the midbody. Its function is as follows. Significantly diminishes the chaperonin TCP1 complex ATPase activity, thus negatively impacts protein folding, including that of actin or tubulin. The protein is Thioredoxin domain-containing protein 9 (TXNDC9) of Bos taurus (Bovine).